A 118-amino-acid chain; its full sequence is Basic phospholipase A2 PA-15 (118 aa).

7 disulfide bridges follow: C11–C71, C27–C117, C29–C45, C44–C98, C51–C91, C60–C84, and C78–C89. Ca(2+) contacts are provided by Y28, G30, and G32. H48 is a catalytic residue. D49 contacts Ca(2+). D92 is an active-site residue.

Belongs to the phospholipase A2 family. Group I subfamily. D49 sub-subfamily. It depends on Ca(2+) as a cofactor. Expressed by the venom gland.

Its subcellular location is the secreted. The enzyme catalyses a 1,2-diacyl-sn-glycero-3-phosphocholine + H2O = a 1-acyl-sn-glycero-3-phosphocholine + a fatty acid + H(+). Functionally, PLA2 catalyzes the calcium-dependent hydrolysis of the 2-acyl groups in 3-sn-phosphoglycerides. The sequence is that of Basic phospholipase A2 PA-15 from Pseudechis australis (Mulga snake).